The primary structure comprises 341 residues: Very-long-chain 3-oxoacyl-CoA reductase (341 aa).

A helical transmembrane segment spans residues 17–37 (ALYGALLLGVYKLTTFALSLV). NADP(+)-binding residues include Val63, Asp117, Asn144, Tyr218, Lys222, Val251, and Ser253. Tyr218 functions as the Proton donor in the catalytic mechanism. Lys222 functions as the Lowers pKa of active site Tyr in the catalytic mechanism.

The protein belongs to the short-chain dehydrogenases/reductases (SDR) family.

It is found in the endoplasmic reticulum membrane. The catalysed reaction is a very-long-chain (3R)-3-hydroxyacyl-CoA + NADP(+) = a very-long-chain 3-oxoacyl-CoA + NADPH + H(+). Its pathway is lipid metabolism; fatty acid biosynthesis. Its function is as follows. Component of the microsomal membrane bound fatty acid elongation system, which produces the 26-carbon very long-chain fatty acids (VLCFA) from palmitate. Catalyzes the reduction of the 3-ketoacyl-CoA intermediate that is formed in each cycle of fatty acid elongation. VLCFAs serve as precursors for ceramide and sphingolipids. This chain is Very-long-chain 3-oxoacyl-CoA reductase, found in Meyerozyma guilliermondii (strain ATCC 6260 / CBS 566 / DSM 6381 / JCM 1539 / NBRC 10279 / NRRL Y-324) (Yeast).